The primary structure comprises 313 residues: ADP,ATP carrier protein (313 aa).

Solcar repeat units lie at residues 11–104, 116–208, and 216–302; these read PPFV…FKKM, KWMA…IKPV, and NNFL…LQVL. A run of 5 helical transmembrane segments spans residues 13 to 40, 81 to 105, 114 to 134, 184 to 205, and 219 to 239; these read FVAD…IKLL, TANV…KKMF, YWKW…TSLL, FGPS…YDSI, and LASF…SYPL. ADP-binding residues include arginine 86 and arginine 98. Residue arginine 243 participates in ADP binding. Positions 243–248 are important for transport activity; that stretch reads RRRMMM. The short motif at 243 to 248 is the Nucleotide carrier signature motif element; that stretch reads RRRMMM. The chain crosses the membrane as a helical span at residues 279–299; the sequence is AGANILRGVAGAGVLSIYDQL.

It belongs to the mitochondrial carrier (TC 2.A.29) family. Monomer.

The protein localises to the mitochondrion inner membrane. The catalysed reaction is ADP(in) + ATP(out) = ADP(out) + ATP(in). Its activity is regulated as follows. The matrix-open state (m-state) is inhibited by the membrane-permeable bongkrekic acid (BKA). The cytoplasmic-open state (c-state) is inhibited by the membrane-impermeable toxic inhibitor carboxyatractyloside (CATR). In terms of biological role, ADP:ATP antiporter that mediates import of ADP into the mitochondrial matrix for ATP synthesis, and export of ATP out to fuel the cell. Cycles between the cytoplasmic-open state (c-state) and the matrix-open state (m-state): operates by the alternating access mechanism with a single substrate-binding site intermittently exposed to either the cytosolic (c-state) or matrix (m-state) side of the inner mitochondrial membrane. This chain is ADP,ATP carrier protein (aac), found in Neurospora crassa (strain ATCC 24698 / 74-OR23-1A / CBS 708.71 / DSM 1257 / FGSC 987).